The sequence spans 214 residues: CASP-like protein 3A1 (214 aa).

Residues 1-49 (MTNGQKIEVAVQLPESKVAATENNETMSGPLVVGGGVAKPFGRKADVMH) lie on the Cytoplasmic side of the membrane. A helical transmembrane segment spans residues 50–70 (VILRLLCTITSVTAVSFMVTA). Residues 71–96 (HQSSTVSIYGFMLPVRSKWSFSHSFE) are Extracellular-facing. Residues 97 to 117 (YLVGVSAAVAAHSLLQLLISM) traverse the membrane as a helical segment. The Cytoplasmic segment spans residues 118-132 (SRLLRKSPVIPSRSH). Residues 133–153 (AWLIFAGDQVFAYAMISAGAA) traverse the membrane as a helical segment. Residues 154–182 (ASGVTNLNRTGIQHTALPNFCKPLNYFCN) lie on the Extracellular side of the membrane. The N-linked (GlcNAc...) asparagine glycan is linked to Asn161. Residues 183–203 (HVAVSIAFAFISCLLLAALAV) form a helical membrane-spanning segment. The Cytoplasmic segment spans residues 204–214 (QEVIWLSKSKY).

It belongs to the Casparian strip membrane proteins (CASP) family. In terms of assembly, homodimer and heterodimers.

The protein localises to the cell membrane. This chain is CASP-like protein 3A1, found in Ricinus communis (Castor bean).